The sequence spans 131 residues: Large ribosomal subunit protein bL17 (131 aa).

This sequence belongs to the bacterial ribosomal protein bL17 family. In terms of assembly, part of the 50S ribosomal subunit. Contacts protein L32.

In Azoarcus sp. (strain BH72), this protein is Large ribosomal subunit protein bL17.